The sequence spans 145 residues: uncharacterized protein (145 aa).

Its subcellular location is the mitochondrion. This is an uncharacterized protein from Arabidopsis thaliana (Mouse-ear cress).